Consider the following 389-residue polypeptide: Arginine biosynthesis bifunctional protein ArgJ (389 aa).

Thr150, Lys173, Thr184, Glu263, Asn384, and Thr389 together coordinate substrate. Thr184 (nucleophile) is an active-site residue.

It belongs to the ArgJ family. As to quaternary structure, heterotetramer of two alpha and two beta chains.

It localises to the cytoplasm. It carries out the reaction N(2)-acetyl-L-ornithine + L-glutamate = N-acetyl-L-glutamate + L-ornithine. The catalysed reaction is L-glutamate + acetyl-CoA = N-acetyl-L-glutamate + CoA + H(+). It functions in the pathway amino-acid biosynthesis; L-arginine biosynthesis; L-ornithine and N-acetyl-L-glutamate from L-glutamate and N(2)-acetyl-L-ornithine (cyclic): step 1/1. The protein operates within amino-acid biosynthesis; L-arginine biosynthesis; N(2)-acetyl-L-ornithine from L-glutamate: step 1/4. Catalyzes two activities which are involved in the cyclic version of arginine biosynthesis: the synthesis of N-acetylglutamate from glutamate and acetyl-CoA as the acetyl donor, and of ornithine by transacetylation between N(2)-acetylornithine and glutamate. In Deinococcus radiodurans (strain ATCC 13939 / DSM 20539 / JCM 16871 / CCUG 27074 / LMG 4051 / NBRC 15346 / NCIMB 9279 / VKM B-1422 / R1), this protein is Arginine biosynthesis bifunctional protein ArgJ.